We begin with the raw amino-acid sequence, 90 residues long: Probable small nuclear ribonucleoprotein F (90 aa).

One can recognise a Sm domain in the interval 7–80; the sequence is NPRPFLQDLV…VLYIKKADEA (74 aa).

It belongs to the snRNP Sm proteins family. SmF/LSm6 subfamily.

It localises to the nucleus. Its subcellular location is the cytoplasm. In terms of biological role, plays a role in pre-mRNA splicing as a core component of the spliceosomal U1, U2, U4 and U5 small nuclear ribonucleoproteins (snRNPs), the building blocks of the spliceosome. This is Probable small nuclear ribonucleoprotein F from Neurospora crassa (strain ATCC 24698 / 74-OR23-1A / CBS 708.71 / DSM 1257 / FGSC 987).